The following is a 179-amino-acid chain: uncharacterized protein (179 aa).

The signal sequence occupies residues 1-27 (MNKSMIQSGGYVLLAGLILAMSSTLFA). Cysteine 43 and cysteine 83 are joined by a disulfide.

It belongs to the fimbrial protein family.

It is found in the fimbrium. Its function is as follows. Part of the yfcOPQRSUV fimbrial operon. Could contribute to adhesion to various surfaces in specific environmental niches. Increases adhesion to eukaryotic T24 bladder epithelial cells in the absence of fim genes. This is an uncharacterized protein from Escherichia coli (strain K12).